A 186-amino-acid polypeptide reads, in one-letter code: MDAPASLRGQLLLAMPGIGDPRFEKAVIAMCAHDENGALGVGVDRVMPGITLHGLLEQLDVDPGIAPDCDILLGGPVEQRRGFVLHSTDWLGEDSLLVEDRWCLTSTLDVLRAIAEGKGPARWLVALGYAGWGEGQLDGEMRRHGWLATRAEDGLIFDHRPPRRWEAAMRSAGIDPRLLAATSGQA.

It belongs to the UPF0301 (AlgH) family.

In Rhizorhabdus wittichii (strain DSM 6014 / CCUG 31198 / JCM 15750 / NBRC 105917 / EY 4224 / RW1) (Sphingomonas wittichii), this protein is UPF0301 protein Swit_2673.